Consider the following 352-residue polypeptide: Holliday junction branch migration complex subunit RuvB (352 aa).

The large ATPase domain (RuvB-L) stretch occupies residues 4-185; the sequence is ADRLIAATGP…FGIVQRLEFY (182 aa). ATP contacts are provided by residues I24, R25, G66, K69, T70, T71, 132-134, R175, Y185, and R222; that span reads EDF. T70 lines the Mg(2+) pocket. Residues 186-256 form a small ATPAse domain (RuvB-S) region; that stretch reads STADLATIVS…VADLALNLLD (71 aa). Residues 259–352 form a head domain (RuvB-H) region; it reads EHGFDHQDRR…VDEFLDAVDD (94 aa). The DNA site is built by R295, R314, and R319.

The protein belongs to the RuvB family. Homohexamer. Forms an RuvA(8)-RuvB(12)-Holliday junction (HJ) complex. HJ DNA is sandwiched between 2 RuvA tetramers; dsDNA enters through RuvA and exits via RuvB. An RuvB hexamer assembles on each DNA strand where it exits the tetramer. Each RuvB hexamer is contacted by two RuvA subunits (via domain III) on 2 adjacent RuvB subunits; this complex drives branch migration. In the full resolvosome a probable DNA-RuvA(4)-RuvB(12)-RuvC(2) complex forms which resolves the HJ.

The protein localises to the cytoplasm. It catalyses the reaction ATP + H2O = ADP + phosphate + H(+). In terms of biological role, the RuvA-RuvB-RuvC complex processes Holliday junction (HJ) DNA during genetic recombination and DNA repair, while the RuvA-RuvB complex plays an important role in the rescue of blocked DNA replication forks via replication fork reversal (RFR). RuvA specifically binds to HJ cruciform DNA, conferring on it an open structure. The RuvB hexamer acts as an ATP-dependent pump, pulling dsDNA into and through the RuvAB complex. RuvB forms 2 homohexamers on either side of HJ DNA bound by 1 or 2 RuvA tetramers; 4 subunits per hexamer contact DNA at a time. Coordinated motions by a converter formed by DNA-disengaged RuvB subunits stimulates ATP hydrolysis and nucleotide exchange. Immobilization of the converter enables RuvB to convert the ATP-contained energy into a lever motion, pulling 2 nucleotides of DNA out of the RuvA tetramer per ATP hydrolyzed, thus driving DNA branch migration. The RuvB motors rotate together with the DNA substrate, which together with the progressing nucleotide cycle form the mechanistic basis for DNA recombination by continuous HJ branch migration. Branch migration allows RuvC to scan DNA until it finds its consensus sequence, where it cleaves and resolves cruciform DNA. This chain is Holliday junction branch migration complex subunit RuvB, found in Pseudomonas fluorescens (strain SBW25).